Reading from the N-terminus, the 899-residue chain is MEVQLGLGRVYPRPPSKTYRGAFQNLFQSVREAIQNPGPRHPEAANIAPPGACLQQRQETSPRRRRRQQHTEDGSPQAHIRGPTGYLALEEEQQPSQQQAASEGHPESSCLPEPGAATAPGKGLPQQPPAPPDQDDSAAPSTLSLLGPTFPGLSSCSADIKDILNEAGTMQLLQQQQQQQQHQQQHQQHQQQQEVISEGSSARAREATGAPSSSKDSYLGGNSTISDSAKELCKAVSVSMGLGVEALEHLSPGEQLRGDCMYASLLGGPPAVRPTPCAPLPECKGLPLDEGPGKSTEETAEYSSFKGGYAKGLEGESLGCSGSSEAGSSGTLEIPSSLSLYKSGALDEAAAYQNRDYYNFPLALSGPPHPPPPTHPHARIKLENPLDYGSAWAAAAAQCRYGDLGSLHGGSVAGPSTGSPPATTSSSWHTLFTAEEGQLYGPGGGGGSSSPSDAGPVAPYGYTRPPQGLTSQESDYSASEVWYPGGVVNRVPYPSPNCVKSEMGPWMENYSGPYGDMRLDSTRDHVLPIDYYFPPQKTCLICGDEASGCHYGALTCGSCKVFFKRAAEGKQKYLCASRNDCTIDKFRRKNCPSCRLRKCYEAGMTLGARKLKKLGNLKLQEEGENSNAGSPTEDPSQKMTVSHIEGYECQPIFLNVLEAIEPGVVCAGHDNNQPDSFAALLSSLNELGERQLVHVVKWAKALPGFRNLHVDDQMAVIQYSWMGLMVFAMGWRSFTNVNSRMLYFAPDLVFNEYRMHKSRMYSQCVRMRHLSQEFGWLQITPQEFLCMKALLLFSIIPVDGLKNQKFFDELRMNYIKELDRIIACKRKNPTSCSRRFYQLTKLLDSVQPIARELHQFTFDLLIKSHMVSVDFPEMMAEIISVQVPKILSGKVKPIYFHTQ.

The tract at residues 1–537 is modulating; that stretch reads MEVQLGLGRV…PIDYYFPPQK (537 aa). The tract at residues 1-566 is interaction with ZNF318; that stretch reads MEVQLGLGRV…GSCKVFFKRA (566 aa). 2 disordered regions span residues 35–146 and 175–222; these read QNPG…LSLL and QQQQ…LGGN. Serine 61 carries the post-translational modification Phosphoserine; by CDK9. Phosphoserine is present on serine 75. 2 stretches are compositionally biased toward low complexity: residues 94–103 and 175–193; these read QPSQQQAASE and QQQQ…QQQQ. Over residues 210-222 the composition is skewed to polar residues; that stretch reads APSSSKDSYLGGN. Residue tyrosine 218 is modified to Phosphotyrosine; by CSK. Serine 251 is subject to Phosphoserine. Tyrosine 262 is modified (phosphotyrosine; by CSK and TNK2). 4 positions are modified to phosphotyrosine; by CSK: tyrosine 302, tyrosine 341, tyrosine 352, and tyrosine 357. Residue tyrosine 358 is modified to Phosphotyrosine; by CSK and TNK2. Lysine 381 is covalently cross-linked (Glycyl lysine isopeptide (Lys-Gly) (interchain with G-Cter in SUMO)). A Phosphotyrosine; by CSK modification is found at tyrosine 388. The disordered stretch occupies residues 436 to 471; the sequence is EGQLYGPGGGGGSSSPSDAGPVAPYGYTRPPQGLTS. Lysine 500 is covalently cross-linked (Glycyl lysine isopeptide (Lys-Gly) (interchain with G-Cter in SUMO)). Phosphotyrosine; by CSK is present on residues tyrosine 514 and tyrosine 531. Residues 531–898 are interaction with LPXN; the sequence is YYFPPQKTCL…GKVKPIYFHT (368 aa). The nuclear receptor DNA-binding region spans 538–611; sequence TCLICGDEAS…AGMTLGARKL (74 aa). 2 NR C4-type zinc fingers span residues 539-559 and 575-599; these read CLIC…CGSC and CASR…LRKC. Residues 551–641 are interaction with HIPK3; sequence YGALTCGSCK…TEDPSQKMTV (91 aa). The interval 571 to 898 is interaction with CCAR1; that stretch reads QKYLCASRND…GKVKPIYFHT (328 aa). Residues 604 to 898 form an interaction with KAT7 region; the sequence is MTLGARKLKK…GKVKPIYFHT (295 aa). Serine 630 carries the phosphoserine modification. The NR LBD domain maps to 648–879; the sequence is ECQPIFLNVL…DFPEMMAEII (232 aa). The 17beta-hydroxy-5alpha-androstan-3-one site is built by asparagine 685 and arginine 732. Residues lysine 825 and lysine 827 each participate in a glycyl lysine isopeptide (Lys-Gly) (interchain with G-Cter in ubiquitin) cross-link. Threonine 857 contributes to the 17beta-hydroxy-5alpha-androstan-3-one binding site. Tyrosine 895 carries the phosphotyrosine; by CSK modification.

The protein belongs to the nuclear hormone receptor family. NR3 subfamily. Binds DNA as a homodimer. Part of a ternary complex containing AR, EFCAB6/DJBP and PARK7. Interacts with HIPK3 and NR0B2 in the presence of androgen. The ligand binding domain interacts with KAT7/HBO1 in the presence of dihydrotestosterone. Interacts with EFCAB6/DJBP, PQBP1, RANBP9, SPDEF, SRA1, TGFB1I1, ZNF318 and RREB1. The AR N-terminal poly-Gln region binds Ran resulting in enhancement of AR-mediated transactivation. Ran-binding decreases as the poly-Gln length increases. Interacts with ZMIZ1/ZIMP10 and ZMIZ2/ZMIP7 which both enhance its transactivation activity. Interacts with RBAK. Interacts via the ligand-binding domain with LXXLL and FXXLF motifs from NCOA1, NCOA2, NCOA3 and MAGEA11. Interacts (via nuclear receptor DNA binding domain and nuclear receptor ligand binding domain) with NCOA4. Interacts with HIP1 (via coiled coil domain). Interacts with SLC30A9 and RAD54L2/ARIP4. Interacts with MACROD1 (via macro domain). Interacts (via ligand-binding domain) with TRIM68. Interacts with TNK2. Interacts with USP26. Interacts with RNF6. Interacts (regulated by RNF6 probably through polyubiquitination) with RNF14; regulates AR transcriptional activity. Interacts with PRMT2 and TRIM24. Interacts with RACK1. Interacts with RANBP10; this interaction enhances hormone-induced AR transcriptional activity. Interacts with PRPF6 in a hormone-independent way; this interaction enhances hormone-induced AR transcriptional activity. Interacts with STK4/MST1. Interacts with ZIPK/DAPK3. Interacts with LPXN. Interacts with MAK. Part of a complex containing AR, MAK and NCOA3. Interacts with CRY1. Interacts with CCAR1 and GATA2. Interacts with BUD31. Interacts with ARID4A. Interacts with ARID4B. Interacts (via NR LBD domain) with ZBTB7A; the interaction is direct and androgen-dependent. Interacts with NCOR1. Interacts with NCOR2. Interacts with CRY2 in a ligand-dependent manner. In terms of processing, phosphorylated in prostate cancer cells in response to several growth factors including EGF. Phosphorylation is induced by c-Src kinase (CSK). Tyr-514 is one of the major phosphorylation sites and an increase in phosphorylation and Src kinase activity is associated with prostate cancer progression. Phosphorylation by TNK2 enhances the DNA-binding and transcriptional activity. Phosphorylation at Ser-61 by CDK9 regulates AR promoter selectivity and cell growth. Phosphorylation by PAK6 leads to AR-mediated transcription inhibition. Post-translationally, sumoylated on Lys-381 (major) and Lys-500. Ubiquitinated. Deubiquitinated by USP26. 'Lys-6' and 'Lys-27'-linked polyubiquitination by RNF6 modulates AR transcriptional activity and specificity. Palmitoylated by ZDHHC7 and ZDHHC21. Palmitoylation is required for plasma membrane targeting and for rapid intracellular signaling via ERK and AKT kinases and cAMP generation.

The protein localises to the nucleus. The protein resides in the cytoplasm. In terms of biological role, steroid hormone receptors are ligand-activated transcription factors that regulate eukaryotic gene expression and affect cellular proliferation and differentiation in target tissues. Transcription factor activity is modulated by bound coactivator and corepressor proteins like ZBTB7A that recruits NCOR1 and NCOR2 to the androgen response elements/ARE on target genes, negatively regulating androgen receptor signaling and androgen-induced cell proliferation. Transcription activation is also down-regulated by NR0B2. Activated, but not phosphorylated, by HIPK3 and ZIPK/DAPK3. This chain is Androgen receptor (Ar), found in Mus musculus (Mouse).